The following is a 122-amino-acid chain: Mth938 domain-containing protein (122 aa).

Residues 6-122 (IASLSWGQMK…RVGGVFHSTC (117 aa)) form an MTH138-like domain region.

It belongs to the AAMDC family.

It localises to the cytoplasm. Functionally, may play a role in preadipocyte differentiation and adipogenesis. The chain is Mth938 domain-containing protein (AAMDC) from Homo sapiens (Human).